Reading from the N-terminus, the 637-residue chain is Anthranilate synthase, phenazine specific (637 aa).

Residues 1-434 are anthranilate synthase component I; it reads MSQTAAHLME…QREQIQADFS (434 aa). Residues 437–628 enclose the Glutamine amidotransferase type-1 domain; sequence QVLIVDAEDT…LRHALIHTPV (192 aa). Catalysis depends on for GATase activity residues Cys-517, His-602, and Glu-604.

The catalysed reaction is chorismate + L-glutamine = anthranilate + pyruvate + L-glutamate + H(+). It functions in the pathway antibiotic biosynthesis; phenazine biosynthesis. Functionally, involved in the biosynthesis of the antibiotic, phenazine, a nitrogen-containing heterocyclic molecule having important roles in virulence, competition and biological control. The sequence is that of Anthranilate synthase, phenazine specific (phzB) from Pseudomonas chlororaphis (Pseudomonas aureofaciens).